The primary structure comprises 133 residues: Profilin-1 (133 aa).

An intrachain disulfide couples C95 to C117.

This sequence belongs to the profilin family. In terms of assembly, dimer and tetramer. Occurs in many kinds of cells as a complex with monomeric actin in a 1:1 ratio.

The protein localises to the cytoplasm. It is found in the cytoskeleton. Its function is as follows. Binds to actin and affects the structure of the cytoskeleton. At high concentrations, profilin prevents the polymerization of actin, whereas it enhances it at low concentrations. By binding to PIP2, it inhibits the formation of IP3 and DG. Possesses high binding affinity for poly(L-proline). This chain is Profilin-1, found in Artemisia vulgaris (Mugwort).